The primary structure comprises 618 residues: 1-deoxy-D-xylulose-5-phosphate synthase (618 aa).

Residues histidine 70 and 111-113 (GHS) each bind thiamine diphosphate. Position 142 (aspartate 142) interacts with Mg(2+). Residues 143–144 (GS), asparagine 171, tyrosine 278, and glutamate 360 contribute to the thiamine diphosphate site. Asparagine 171 provides a ligand contact to Mg(2+).

The protein belongs to the transketolase family. DXPS subfamily. Homodimer. The cofactor is Mg(2+). Requires thiamine diphosphate as cofactor.

It carries out the reaction D-glyceraldehyde 3-phosphate + pyruvate + H(+) = 1-deoxy-D-xylulose 5-phosphate + CO2. It participates in metabolic intermediate biosynthesis; 1-deoxy-D-xylulose 5-phosphate biosynthesis; 1-deoxy-D-xylulose 5-phosphate from D-glyceraldehyde 3-phosphate and pyruvate: step 1/1. In terms of biological role, catalyzes the acyloin condensation reaction between C atoms 2 and 3 of pyruvate and glyceraldehyde 3-phosphate to yield 1-deoxy-D-xylulose-5-phosphate (DXP). This is 1-deoxy-D-xylulose-5-phosphate synthase from Helicobacter pylori (strain J99 / ATCC 700824) (Campylobacter pylori J99).